Consider the following 679-residue polypeptide: DNA ligase (679 aa).

Residues Asp-32–Asp-36, Ser-81–Leu-82, and Glu-115 contribute to the NAD(+) site. Lys-117 (N6-AMP-lysine intermediate) is an active-site residue. NAD(+) is bound by residues Arg-138, Glu-175, Lys-293, and Lys-317. Positions 411, 414, 429, and 434 each coordinate Zn(2+). One can recognise a BRCT domain in the interval Asn-601 to Thr-679.

This sequence belongs to the NAD-dependent DNA ligase family. LigA subfamily. Mg(2+) serves as cofactor. Mn(2+) is required as a cofactor.

It catalyses the reaction NAD(+) + (deoxyribonucleotide)n-3'-hydroxyl + 5'-phospho-(deoxyribonucleotide)m = (deoxyribonucleotide)n+m + AMP + beta-nicotinamide D-nucleotide.. Its function is as follows. DNA ligase that catalyzes the formation of phosphodiester linkages between 5'-phosphoryl and 3'-hydroxyl groups in double-stranded DNA using NAD as a coenzyme and as the energy source for the reaction. It is essential for DNA replication and repair of damaged DNA. The polypeptide is DNA ligase (Parasynechococcus marenigrum (strain WH8102)).